A 382-amino-acid polypeptide reads, in one-letter code: ATP phosphoribosyltransferase regulatory subunit (382 aa).

Belongs to the class-II aminoacyl-tRNA synthetase family. HisZ subfamily. In terms of assembly, heteromultimer composed of HisG and HisZ subunits.

It localises to the cytoplasm. It functions in the pathway amino-acid biosynthesis; L-histidine biosynthesis; L-histidine from 5-phospho-alpha-D-ribose 1-diphosphate: step 1/9. Functionally, required for the first step of histidine biosynthesis. May allow the feedback regulation of ATP phosphoribosyltransferase activity by histidine. The chain is ATP phosphoribosyltransferase regulatory subunit from Acidovorax ebreus (strain TPSY) (Diaphorobacter sp. (strain TPSY)).